A 187-amino-acid chain; its full sequence is Ribosome-recycling factor (187 aa).

This sequence belongs to the RRF family.

The protein resides in the cytoplasm. Responsible for the release of ribosomes from messenger RNA at the termination of protein biosynthesis. May increase the efficiency of translation by recycling ribosomes from one round of translation to another. The protein is Ribosome-recycling factor of Nitrosococcus oceani (strain ATCC 19707 / BCRC 17464 / JCM 30415 / NCIMB 11848 / C-107).